A 443-amino-acid chain; its full sequence is Protein IQ-DOMAIN 11 (443 aa).

Positions 5 to 20 (KGLFTVLKRIFISEVN) are calmodulin-binding. 2 consecutive short sequence motifs (nuclear localization signal) follow at residues 11–18 (LKRIFISE) and 27–34 (RRKWTFWK). The segment at 44-65 (ITAPPEHRTSHESHEEQKEEIV) is disordered. The segment covering 48–64 (PEHRTSHESHEEQKEEI) has biased composition (basic and acidic residues). 2 consecutive IQ domains span residues 113 to 138 (AATR…GIVK) and 139 to 161 (LQAY…CLQS). The segment covering 277 to 293 (FSSKTKPKDETLNEKQL) has biased composition (basic and acidic residues). A disordered region spans residues 277–361 (FSSKTKPKDE…PRSFDTQSES (85 aa)).

Belongs to the IQD family. In terms of assembly, binds to multiple calmodulin (CaM) in the presence of Ca(2+) and CaM-like proteins. As to expression, expressed in hypocotyls, cotyledons, leaves and petioles.

The protein localises to the nucleus. It localises to the cytoplasm. The protein resides in the cytoskeleton. In terms of biological role, may be involved in cooperative interactions with calmodulins or calmodulin-like proteins. Recruits calmodulin proteins to microtubules, thus being a potential scaffold in cellular signaling and trafficking. Regulates cell shape and elongation in aerial organs (i.e. epidermis pavement cells) probably by regulating cortical microtubules (MT) arrays orientation. May associate with nucleic acids and regulate gene expression at the transcriptional or post-transcriptional level. This Arabidopsis thaliana (Mouse-ear cress) protein is Protein IQ-DOMAIN 11.